Reading from the N-terminus, the 166-residue chain is NAD(P)H-quinone oxidoreductase subunit I, chloroplastic (166 aa).

4Fe-4S ferredoxin-type domains are found at residues 55–84 (GRIH…VDWK) and 95–124 (LNYS…MTEE). Positions 64, 67, 70, 74, 104, 107, 110, and 114 each coordinate [4Fe-4S] cluster.

The protein belongs to the complex I 23 kDa subunit family. In terms of assembly, NDH is composed of at least 16 different subunits, 5 of which are encoded in the nucleus. [4Fe-4S] cluster is required as a cofactor.

It is found in the plastid. It localises to the chloroplast thylakoid membrane. It carries out the reaction a plastoquinone + NADH + (n+1) H(+)(in) = a plastoquinol + NAD(+) + n H(+)(out). The catalysed reaction is a plastoquinone + NADPH + (n+1) H(+)(in) = a plastoquinol + NADP(+) + n H(+)(out). Its function is as follows. NDH shuttles electrons from NAD(P)H:plastoquinone, via FMN and iron-sulfur (Fe-S) centers, to quinones in the photosynthetic chain and possibly in a chloroplast respiratory chain. The immediate electron acceptor for the enzyme in this species is believed to be plastoquinone. Couples the redox reaction to proton translocation, and thus conserves the redox energy in a proton gradient. In Polymnia canadensis (White-flowered leaf-cup), this protein is NAD(P)H-quinone oxidoreductase subunit I, chloroplastic.